The following is a 250-amino-acid chain: Hydroxyethylthiazole kinase (250 aa).

A substrate-binding site is contributed by M39. The ATP site is built by R114 and T159. G186 provides a ligand contact to substrate.

Belongs to the Thz kinase family. Requires Mg(2+) as cofactor.

The enzyme catalyses 5-(2-hydroxyethyl)-4-methylthiazole + ATP = 4-methyl-5-(2-phosphooxyethyl)-thiazole + ADP + H(+). The protein operates within cofactor biosynthesis; thiamine diphosphate biosynthesis; 4-methyl-5-(2-phosphoethyl)-thiazole from 5-(2-hydroxyethyl)-4-methylthiazole: step 1/1. Functionally, catalyzes the phosphorylation of the hydroxyl group of 4-methyl-5-beta-hydroxyethylthiazole (THZ). This chain is Hydroxyethylthiazole kinase, found in Lactococcus lactis subsp. cremoris (strain MG1363).